Consider the following 89-residue polypeptide: Small ribosomal subunit protein uS15 (89 aa).

It belongs to the universal ribosomal protein uS15 family. In terms of assembly, part of the 30S ribosomal subunit. Forms a bridge to the 50S subunit in the 70S ribosome, contacting the 23S rRNA.

Functionally, one of the primary rRNA binding proteins, it binds directly to 16S rRNA where it helps nucleate assembly of the platform of the 30S subunit by binding and bridging several RNA helices of the 16S rRNA. In terms of biological role, forms an intersubunit bridge (bridge B4) with the 23S rRNA of the 50S subunit in the ribosome. This chain is Small ribosomal subunit protein uS15, found in Granulibacter bethesdensis (strain ATCC BAA-1260 / CGDNIH1).